The sequence spans 460 residues: Serine incorporator 5 (460 aa).

The Extracellular portion of the chain corresponds to 1-36; it reads MSARCCAGQLACCCGSAGCALCCGCCPKFRQSRSTR. The chain crosses the membrane as a helical span at residues 37–57; it reads FMYLFYFTLVIIPCCVMMSPS. Topologically, residues 58–89 are cytoplasmic; the sequence is VMKQMTEHIPFFEDFCKGIKAGDTCENLVGYS. The chain crosses the membrane as a helical span at residues 90–110; the sequence is AVYRVCFGMACFFFVFCVLTF. The Extracellular portion of the chain corresponds to 111-124; that stretch reads KVNNSKSCRASIHN. N-linked (GlcNAc...) asparagine glycosylation occurs at N113. Residues 125–145 form a helical membrane-spanning segment; the sequence is GFWFFKLLLLGAMCSGAFFIP. Residues 146 to 156 are Cytoplasmic-facing; it reads DQETFLNVWRY. Residues 157–177 form a helical membrane-spanning segment; that stretch reads VGAVGSFFFICIQLLLIVEFA. At 178 to 197 the chain is on the extracellular side; it reads HKWNKNWTAGTVRNKLWYAS. N183 carries an N-linked (GlcNAc...) asparagine glycan. The helical transmembrane segment at 198 to 218 threads the bilayer; that stretch reads LSLALIMYSIAVGGLALMAVF. Over 219 to 229 the chain is Cytoplasmic; that stretch reads YTQWDDCMDNK. Residues 230–250 traverse the membrane as a helical segment; the sequence is ILLGVHGGLCVLISLAAISPC. The Extracellular segment spans residues 251–258; sequence VQNRQPHS. A helical membrane pass occupies residues 259–279; sequence GLLQPGLISCYVTYLTFSALT. At 280–309 the chain is on the cytoplasmic side; sequence SKPEKVVKDEHGKNVTICVPDFGQDFRRDE. A helical membrane pass occupies residues 310 to 330; sequence SMVTWLGTLLLVVCISYSCLT. Over 331–390 the chain is Extracellular; sequence STTRSSSDALQRRYGAPELEVARCCFCFGPDGEDTEEQQNVKEGPRVIYDEKKGTVYSYS. The chain crosses the membrane as a helical span at residues 391–411; the sequence is YFHFVLLLASLYVMMTLTSWF. At 412–427 the chain is on the cytoplasmic side; that stretch reads HYENATIETFFVGSWS. Residues 428–448 traverse the membrane as a helical segment; that stretch reads IFWVKMASCWMCVLLYLWTLV. Residues 449-460 are Extracellular-facing; it reads APLCCPSRQFSV.

Belongs to the TDE1 family. As to expression, brain. Expressed at high levels in the white matter and the oligodendroglial cells of the brain. Expressed at low levels in the liver.

The protein resides in the cell membrane. It carries out the reaction a 1,2-diacyl-sn-glycero-3-phospho-L-serine(in) = a 1,2-diacyl-sn-glycero-3-phospho-L-serine(out). The enzyme catalyses a 1,2-diacyl-sn-glycero-3-phosphocholine(in) = a 1,2-diacyl-sn-glycero-3-phosphocholine(out). The catalysed reaction is a 1,2-diacyl-sn-glycero-3-phosphoethanolamine(in) = a 1,2-diacyl-sn-glycero-3-phosphoethanolamine(out). Restriction factor required to restrict infectivity of gammaretroviruses: acts by inhibiting an early step of viral infection. Impairs the penetration of the viral particle into the cytoplasm. Non-ATP-dependent, non-specific lipid transporter for phosphatidylserine, phosphatidylcholine, and phosphatidylethanolamine. Functions as a scramblase that flips lipids in both directions across the membrane. Phospholipid scrambling results in gammaretroviral surface exposure of phosphatidylserine and loss of membrane asymmetry, which leads to loss of infectivity. Enhances the incorporation of serine into phosphatidylserine and sphingolipids. May play a role in providing serine molecules for the formation of myelin glycosphingolipids in oligodendrocytes. This is Serine incorporator 5 (Serinc5) from Rattus norvegicus (Rat).